The sequence spans 265 residues: Selenoprotein Pb (265 aa).

The first 18 residues, 1 to 18 (MQALWPLLLSALPALLGA), serve as a signal peptide directing secretion. A glycan (N-linked (GlcNAc...) asparagine) is linked at Asn-28. Position 64 (Sec-64) is a non-standard amino acid, selenocysteine. N-linked (GlcNAc...) asparagine glycosylation is found at Asn-88, Asn-178, Asn-184, and Asn-207. A disordered region spans residues 188–265 (SESSDSTKND…SHQEHVHNHR (78 aa)). Residues 201–211 (ENNQRPNSTEP) are compositionally biased toward polar residues. Over residues 215–231 (AHHHHHQQHEPHHHHHN) the composition is skewed to basic residues. Over residues 239 to 265 (KSGDSDVTGKPKEPPHHSHQEHVHNHR) the composition is skewed to basic and acidic residues.

It localises to the secreted. Its function is as follows. Might be responsible for some of the extracellular antioxidant defense properties of selenium. This is Selenoprotein Pb (sepp1b) from Danio rerio (Zebrafish).